Consider the following 257-residue polypeptide: Snake venom serine protease Dav-KN (257 aa).

A signal peptide spans 1 to 18 (MVLIRVLANLLILQLSYA). A propeptide spanning residues 19 to 24 (QKSSEL) is cleaved from the precursor. Positions 25 to 248 (VIGGDECNIN…HLDWIKGIIA (224 aa)) constitute a Peptidase S1 domain. 5 disulfide bridges follow: Cys31–Cys162, Cys49–Cys65, Cys97–Cys255, Cys173–Cys188, and Cys199–Cys224. Active-site charge relay system residues include His64 and Asp109. Catalysis depends on Ser203, which acts as the Charge relay system.

It belongs to the peptidase S1 family. Snake venom subfamily. As to quaternary structure, monomer. In terms of tissue distribution, expressed by the venom gland.

It localises to the secreted. Functionally, snake venom serine protease that may act in the hemostasis system of the prey. The sequence is that of Snake venom serine protease Dav-KN from Deinagkistrodon acutus (Hundred-pace snake).